The primary structure comprises 133 residues: Large ribosomal subunit protein bL19 (133 aa).

A disordered region spans residues 114–133; it reads IAERQMTAASKEEPAEKSEA. Positions 123-133 are enriched in basic and acidic residues; it reads SKEEPAEKSEA.

Belongs to the bacterial ribosomal protein bL19 family.

Its function is as follows. This protein is located at the 30S-50S ribosomal subunit interface and may play a role in the structure and function of the aminoacyl-tRNA binding site. This is Large ribosomal subunit protein bL19 from Phenylobacterium zucineum (strain HLK1).